A 124-amino-acid polypeptide reads, in one-letter code: Small ribosomal subunit protein uS12 (124 aa).

The segment at 1 to 42 (MPTIQQLVRKGRRPKVNKTKSPALRGNPQQRGVCSRVYTTTP) is disordered. Basic residues predominate over residues 9–18 (RKGRRPKVNK). The segment covering 27–42 (NPQQRGVCSRVYTTTP) has biased composition (polar residues). Position 89 is a 3-methylthioaspartic acid (aspartate 89).

This sequence belongs to the universal ribosomal protein uS12 family. As to quaternary structure, part of the 30S ribosomal subunit. Contacts proteins S8 and S17. May interact with IF1 in the 30S initiation complex.

Its function is as follows. With S4 and S5 plays an important role in translational accuracy. Interacts with and stabilizes bases of the 16S rRNA that are involved in tRNA selection in the A site and with the mRNA backbone. Located at the interface of the 30S and 50S subunits, it traverses the body of the 30S subunit contacting proteins on the other side and probably holding the rRNA structure together. The combined cluster of proteins S8, S12 and S17 appears to hold together the shoulder and platform of the 30S subunit. The polypeptide is Small ribosomal subunit protein uS12 (Tropheryma whipplei (strain TW08/27) (Whipple's bacillus)).